The primary structure comprises 180 residues: MSSRLEKFYKDEVVPALMKQFGYTNPMEVPKLVKVTLNMGVGEAATNKKILENAVGDMTKISGQKPVVTKSRVSVASFKIRDGWPIGCKTTLRRHKMYEFLDRLINISLPRVRDFRGVSGRSFDGRGNFNMGVKEQIIFPEIDFDAVDAIRGMDIAITTTAKTDAEAKALLAAFKFPFRN.

The protein belongs to the universal ribosomal protein uL5 family. As to quaternary structure, part of the 50S ribosomal subunit; part of the 5S rRNA/L5/L18/L25 subcomplex. Contacts the 5S rRNA and the P site tRNA. Forms a bridge to the 30S subunit in the 70S ribosome.

In terms of biological role, this is one of the proteins that bind and probably mediate the attachment of the 5S RNA into the large ribosomal subunit, where it forms part of the central protuberance. In the 70S ribosome it contacts protein S13 of the 30S subunit (bridge B1b), connecting the 2 subunits; this bridge is implicated in subunit movement. Contacts the P site tRNA; the 5S rRNA and some of its associated proteins might help stabilize positioning of ribosome-bound tRNAs. In Stenotrophomonas maltophilia (strain K279a), this protein is Large ribosomal subunit protein uL5.